We begin with the raw amino-acid sequence, 133 residues long: Peptide methionine sulfoxide reductase MsrB (133 aa).

A compositionally biased stretch (basic and acidic residues) spans 1–12 (MSEKVQKSEHEW). A disordered region spans residues 1 to 36 (MSEKVQKSEHEWQQQLTPEQYRVTREKGTERPFTGD). In terms of domain architecture, MsrB spans 9–132 (EHEWQQQLTP…NSVSLDFHPG (124 aa)). 4 residues coordinate Zn(2+): Cys48, Cys51, Cys97, and Cys100. Cys121 functions as the Nucleophile in the catalytic mechanism.

The protein belongs to the MsrB Met sulfoxide reductase family. It depends on Zn(2+) as a cofactor.

The enzyme catalyses L-methionyl-[protein] + [thioredoxin]-disulfide + H2O = L-methionyl-(R)-S-oxide-[protein] + [thioredoxin]-dithiol. The sequence is that of Peptide methionine sulfoxide reductase MsrB from Chromohalobacter salexigens (strain ATCC BAA-138 / DSM 3043 / CIP 106854 / NCIMB 13768 / 1H11).